The primary structure comprises 456 residues: Bifunctional protein GlmU (456 aa).

The segment at 1-230 is pyrophosphorylase; it reads MDKRFAVVLA…FQETLGVNDR (230 aa). UDP-N-acetyl-alpha-D-glucosamine-binding positions include 9-12, Lys23, Gln73, and 78-79; these read LAAG and GT. Asp103 lines the Mg(2+) pocket. Residues Gly140, Glu155, Asn170, and Asn228 each coordinate UDP-N-acetyl-alpha-D-glucosamine. Asn228 lines the Mg(2+) pocket. The segment at 231-251 is linker; sequence VALSQAEIYMKQRINKRHMQN. The segment at 252–456 is N-acetyltransferase; that stretch reads GVSLIDPDNT…EDYAENIHKK (205 aa). Residues Arg333 and Lys351 each coordinate UDP-N-acetyl-alpha-D-glucosamine. The Proton acceptor role is filled by His363. 2 residues coordinate UDP-N-acetyl-alpha-D-glucosamine: Tyr366 and Asn377. Acetyl-CoA contacts are provided by residues 386–387, Ala423, and Arg440; that span reads NY.

In the N-terminal section; belongs to the N-acetylglucosamine-1-phosphate uridyltransferase family. It in the C-terminal section; belongs to the transferase hexapeptide repeat family. In terms of assembly, homotrimer. The cofactor is Mg(2+).

It localises to the cytoplasm. It catalyses the reaction alpha-D-glucosamine 1-phosphate + acetyl-CoA = N-acetyl-alpha-D-glucosamine 1-phosphate + CoA + H(+). It carries out the reaction N-acetyl-alpha-D-glucosamine 1-phosphate + UTP + H(+) = UDP-N-acetyl-alpha-D-glucosamine + diphosphate. The protein operates within nucleotide-sugar biosynthesis; UDP-N-acetyl-alpha-D-glucosamine biosynthesis; N-acetyl-alpha-D-glucosamine 1-phosphate from alpha-D-glucosamine 6-phosphate (route II): step 2/2. It functions in the pathway nucleotide-sugar biosynthesis; UDP-N-acetyl-alpha-D-glucosamine biosynthesis; UDP-N-acetyl-alpha-D-glucosamine from N-acetyl-alpha-D-glucosamine 1-phosphate: step 1/1. Its pathway is bacterial outer membrane biogenesis; LPS lipid A biosynthesis. Catalyzes the last two sequential reactions in the de novo biosynthetic pathway for UDP-N-acetylglucosamine (UDP-GlcNAc). The C-terminal domain catalyzes the transfer of acetyl group from acetyl coenzyme A to glucosamine-1-phosphate (GlcN-1-P) to produce N-acetylglucosamine-1-phosphate (GlcNAc-1-P), which is converted into UDP-GlcNAc by the transfer of uridine 5-monophosphate (from uridine 5-triphosphate), a reaction catalyzed by the N-terminal domain. The chain is Bifunctional protein GlmU from Bacillus licheniformis (strain ATCC 14580 / DSM 13 / JCM 2505 / CCUG 7422 / NBRC 12200 / NCIMB 9375 / NCTC 10341 / NRRL NRS-1264 / Gibson 46).